The primary structure comprises 223 residues: MVKAILLDIEGTIAPLSFVKEVMFPYSKKKLREFLEKNWEKPEIKKIVQEVEKIEGRELSLEEAVQLFSRWIDEDRKITPLKELQGHIWEEGFKSGELKAPLYEDAYEKIKEWKEKGIPVYIYSSGSVKAQNLFFGHSVYGDIRNLFSGFFDTKIGSKRERSSYEKIAKEIGLPPHEILFISDNPEELKAAKEAGMKVIQSVREGVEPSGDFEKITSFRELEI.

The protein belongs to the HAD-like hydrolase superfamily. MasA/MtnC family. In terms of assembly, monomer. Requires Mg(2+) as cofactor.

The enzyme catalyses 5-methylsulfanyl-2,3-dioxopentyl phosphate + H2O = 1,2-dihydroxy-5-(methylsulfanyl)pent-1-en-3-one + phosphate. The protein operates within amino-acid biosynthesis; L-methionine biosynthesis via salvage pathway; L-methionine from S-methyl-5-thio-alpha-D-ribose 1-phosphate: step 3/6. Its pathway is amino-acid biosynthesis; L-methionine biosynthesis via salvage pathway; L-methionine from S-methyl-5-thio-alpha-D-ribose 1-phosphate: step 4/6. Functionally, bifunctional enzyme that catalyzes the enolization of 2,3-diketo-5-methylthiopentyl-1-phosphate (DK-MTP-1-P) into the intermediate 2-hydroxy-3-keto-5-methylthiopentenyl-1-phosphate (HK-MTPenyl-1-P), which is then dephosphorylated to form the acireductone 1,2-dihydroxy-3-keto-5-methylthiopentene (DHK-MTPene). The protein is Enolase-phosphatase E1 of Aquifex aeolicus (strain VF5).